The following is a 118-amino-acid chain: Cysteine--tRNA ligase (118 aa).

Cys28 lines the Zn(2+) pocket. The 'HIGH' region motif lies at 30-40; the sequence is PTVYNYIHIGN.

Belongs to the class-I aminoacyl-tRNA synthetase family. Monomer. It depends on Zn(2+) as a cofactor.

The protein resides in the cytoplasm. The catalysed reaction is tRNA(Cys) + L-cysteine + ATP = L-cysteinyl-tRNA(Cys) + AMP + diphosphate. This chain is Cysteine--tRNA ligase (cysS), found in Staphylococcus xylosus.